We begin with the raw amino-acid sequence, 459 residues long: Argininosuccinate lyase (459 aa).

This sequence belongs to the lyase 1 family. Argininosuccinate lyase subfamily.

The protein resides in the cytoplasm. It carries out the reaction 2-(N(omega)-L-arginino)succinate = fumarate + L-arginine. Its pathway is amino-acid biosynthesis; L-arginine biosynthesis; L-arginine from L-ornithine and carbamoyl phosphate: step 3/3. This chain is Argininosuccinate lyase, found in Staphylococcus aureus (strain Mu3 / ATCC 700698).